We begin with the raw amino-acid sequence, 197 residues long: Phosphoheptose isomerase (197 aa).

In terms of domain architecture, SIS spans methionine 36–glutamate 197. Asparagine 51–glycine 53 is a binding site for substrate. Zn(2+) is bound by residues histidine 60 and glutamate 64. Substrate-binding positions include glutamate 64, asparagine 93 to aspartate 94, serine 119 to serine 121, serine 124, and glutamine 174. Glutamine 174 and histidine 182 together coordinate Zn(2+).

It belongs to the SIS family. GmhA subfamily. In terms of assembly, homotetramer. The cofactor is Zn(2+).

It localises to the cytoplasm. The catalysed reaction is 2 D-sedoheptulose 7-phosphate = D-glycero-alpha-D-manno-heptose 7-phosphate + D-glycero-beta-D-manno-heptose 7-phosphate. The protein operates within carbohydrate biosynthesis; D-glycero-D-manno-heptose 7-phosphate biosynthesis; D-glycero-alpha-D-manno-heptose 7-phosphate and D-glycero-beta-D-manno-heptose 7-phosphate from sedoheptulose 7-phosphate: step 1/1. In terms of biological role, catalyzes the isomerization of sedoheptulose 7-phosphate in D-glycero-D-manno-heptose 7-phosphate. This chain is Phosphoheptose isomerase, found in Azoarcus sp. (strain BH72).